A 330-amino-acid chain; its full sequence is Polygalacturonase inhibitor 1 (330 aa).

The N-terminal stretch at 1 to 21 (MDKTATLCLLFLFTFLTTCLS) is a signal peptide. Intrachain disulfides connect cysteine 25/cysteine 55 and cysteine 56/cysteine 63. 10 LRR repeats span residues 69–93 (NHRV…VGDL), 94–117 (PYLE…TIAK), 118–142 (LKNL…ISQL), 143–166 (KNLE…LSTL), 167–189 (PKIL…SFGS), 191–215 (PGTV…LGNI), 217–237 (FNRI…LFGS), 238–260 (NKTT…KVDI), 261–285 (PKTL…WTEA), and 287–309 (LQFF…KLQT). Asparagine 106 and asparagine 130 each carry an N-linked (GlcNAc...) asparagine glycan. Residue asparagine 238 is glycosylated (N-linked (GlcNAc...) asparagine). Asparagine 291 carries an N-linked (GlcNAc...) asparagine glycan. 2 disulfides stabilise this stretch: cysteine 298–cysteine 320 and cysteine 322–cysteine 329.

Belongs to the polygalacturonase-inhibiting protein family.

The protein localises to the secreted. The protein resides in the cell wall. It localises to the membrane. Functionally, inhibitor of fungal polygalacturonase. It is an important factor for plant resistance to phytopathogenic fungi. This chain is Polygalacturonase inhibitor 1 (PGIP1), found in Arabidopsis thaliana (Mouse-ear cress).